A 270-amino-acid chain; its full sequence is Sugar phosphatase YidA (270 aa).

Asp9 functions as the Nucleophile in the catalytic mechanism. Asp9 contributes to the Mg(2+) binding site. Met10 is a phosphate binding site. Asp11 contributes to the Mg(2+) binding site. Phosphate contacts are provided by residues 43-44 and Lys197; that span reads TG. Residue Asp220 participates in Mg(2+) binding. A phosphate-binding site is contributed by Asn223.

Belongs to the HAD-like hydrolase superfamily. Cof family. In terms of assembly, homodimer. Mg(2+) serves as cofactor.

It carries out the reaction sugar phosphate + H2O = sugar + phosphate.. Its function is as follows. Catalyzes the dephosphorylation of different sugar phosphates. The polypeptide is Sugar phosphatase YidA (yidA) (Escherichia coli O6:H1 (strain CFT073 / ATCC 700928 / UPEC)).